Consider the following 301-residue polypeptide: Putative S-adenosyl-L-methionine-dependent methyltransferase MMAR_4850 (301 aa).

S-adenosyl-L-methionine contacts are provided by residues Asp127 and 156–157 (DL).

The protein belongs to the UPF0677 family.

Exhibits S-adenosyl-L-methionine-dependent methyltransferase activity. The protein is Putative S-adenosyl-L-methionine-dependent methyltransferase MMAR_4850 of Mycobacterium marinum (strain ATCC BAA-535 / M).